The following is a 508-amino-acid chain: DNA polymerase II small subunit (508 aa).

Low complexity predominate over residues 66–80 (ASSAAQTSAPASTPP). The interval 66–122 (ASSAAQTSAPASTPPDEATTHTDPSATDTPPNHDGGRAATADARSVEIDGDMTGAST) is disordered. The span at 86–95 (HTDPSATDTP) shows a compositional bias: polar residues.

This sequence belongs to the DNA polymerase delta/II small subunit family. Heterodimer of a large subunit and a small subunit.

The enzyme catalyses DNA(n) + a 2'-deoxyribonucleoside 5'-triphosphate = DNA(n+1) + diphosphate. It carries out the reaction Exonucleolytic cleavage in the 3'- to 5'-direction to yield nucleoside 5'-phosphates.. Possesses two activities: a DNA synthesis (polymerase) and an exonucleolytic activity that degrades single-stranded DNA in the 3' to 5' direction. Has a template-primer preference which is characteristic of a replicative DNA polymerase. This chain is DNA polymerase II small subunit, found in Halobacterium salinarum (strain ATCC 29341 / DSM 671 / R1).